Consider the following 208-residue polypeptide: Outer-membrane lipoprotein carrier protein (208 aa).

The first 22 residues, 1–22 (MKKIFTIAALSLPLFCHLPAMA), serve as a signal peptide directing secretion.

The protein belongs to the LolA family. In terms of assembly, monomer.

Its subcellular location is the periplasm. Functionally, participates in the translocation of lipoproteins from the inner membrane to the outer membrane. Only forms a complex with a lipoprotein if the residue after the N-terminal Cys is not an aspartate (The Asp acts as a targeting signal to indicate that the lipoprotein should stay in the inner membrane). The chain is Outer-membrane lipoprotein carrier protein from Shewanella pealeana (strain ATCC 700345 / ANG-SQ1).